The sequence spans 324 residues: tRNA U34 carboxymethyltransferase (324 aa).

Carboxy-S-adenosyl-L-methionine-binding positions include lysine 91, tryptophan 105, lysine 110, glycine 130, 152-154, 181-182, methionine 196, tyrosine 200, and arginine 315; these read DPS and IE.

It belongs to the class I-like SAM-binding methyltransferase superfamily. CmoB family. In terms of assembly, homotetramer.

The catalysed reaction is carboxy-S-adenosyl-L-methionine + 5-hydroxyuridine(34) in tRNA = 5-carboxymethoxyuridine(34) in tRNA + S-adenosyl-L-homocysteine + H(+). Functionally, catalyzes carboxymethyl transfer from carboxy-S-adenosyl-L-methionine (Cx-SAM) to 5-hydroxyuridine (ho5U) to form 5-carboxymethoxyuridine (cmo5U) at position 34 in tRNAs. This Aliivibrio fischeri (strain MJ11) (Vibrio fischeri) protein is tRNA U34 carboxymethyltransferase.